The following is a 272-amino-acid chain: D-aminoacyl-tRNA deacylase (272 aa).

The protein belongs to the DtdA deacylase family. As to quaternary structure, monomer. Zn(2+) is required as a cofactor.

The catalysed reaction is a D-aminoacyl-tRNA + H2O = a tRNA + a D-alpha-amino acid + H(+). It carries out the reaction glycyl-tRNA(Ala) + H2O = tRNA(Ala) + glycine + H(+). Its function is as follows. D-aminoacyl-tRNA deacylase with broad substrate specificity. By recycling D-aminoacyl-tRNA to D-amino acids and free tRNA molecules, this enzyme counteracts the toxicity associated with the formation of D-aminoacyl-tRNA entities in vivo. This chain is D-aminoacyl-tRNA deacylase, found in Thermococcus kodakarensis (strain ATCC BAA-918 / JCM 12380 / KOD1) (Pyrococcus kodakaraensis (strain KOD1)).